The following is a 200-amino-acid chain: MSLQLEKNLILELIPHFYSLGWMKFGSGNFCLKNNGYAICVKDRVQRDFITENDIVTFNLSNQSVTKDLVNWAYIFSWVLSNMDAVACIYSTSVAAVGASMYNEKFTTQSKEMIKGIPKGNPSAGYLCCFDTLEVPIIHNGDSKTILDELKKVIELYPQTCAVLIRGHGVIGWGATWEKSKTQMECYEYLFELDYKLKTL.

Belongs to the aldolase class II family. MtnB subfamily.

The sequence is that of Methylthioribulose-1-phosphate dehydratase-like protein from Schizosaccharomyces pombe (strain 972 / ATCC 24843) (Fission yeast).